The following is a 169-amino-acid chain: Myelin basic protein (169 aa).

At Ala-1 the chain carries N-acetylalanine. The disordered stretch occupies residues 1–114; that stretch reads AAQKRPSQRS…GRGLSLSRFS (114 aa). Position 7 is a phosphoserine; in C5 and C6 (Ser-7). The residue at position 10 (Ser-10) is a Phosphoserine. Tyr-12 bears the Phosphotyrosine mark. Ser-17 is subject to Phosphoserine. Thr-18 carries the phosphothreonine modification. Arg-23 is modified (citrulline; in form C8b). Arg-29 is modified (citrulline). Position 33 is a phosphothreonine (Thr-33). Phosphoserine is present on Ser-38. Residue Arg-41 is modified to Citrulline; alternate. Arg-41 is subject to Omega-N-methylarginine; alternate. An induces experimental autoimmune encephalomyelitis (EAE) 1 region spans residues 43–87; the sequence is FGSDRGAPKRGSGKDGHHAARTTHYGSLPQKAQGHRPQDENPVVH. Arg-47 carries the post-translational modification Citrulline; in form C8b. Arg-47 carries the omega-N-methylarginine modification. Position 54 is a phosphoserine; in C4, C5 and C6 (Ser-54). Arg-63 bears the Citrulline mark. Thr-65 carries the phosphothreonine modification. A Phosphotyrosine modification is found at Tyr-67. A Phosphothreonine modification is found at Thr-94. Arg-96 carries the post-translational modification Citrulline; in form C2, C3, C8a and C8b. Position 97 is a phosphothreonine; by MAPK; in C3, C4, C5 and C6 (Thr-97). Gln-102 carries the deamidated glutamine; in form C5 modification. Arg-106 is modified (citrulline; alternate). At Arg-106 the chain carries Omega-N-methylarginine; alternate. Arg-106 carries the post-translational modification Symmetric dimethylarginine; alternate. Arg-112 carries the citrulline modification. Phosphoserine is present on Ser-114. The tract at residues 114 to 122 is induces experimental autoimmune encephalomyelitis (EAE) 2; that stretch reads SWGAEGQKP. At Gln-120 the chain carries Deamidated glutamine; in form C3. An N6-acetyllysine modification is found at Lys-121. At Arg-129 the chain carries Citrulline. Residues 133–169 are disordered; sequence YKSAHKGLKGHDAQGTLSKIFKLGGRDSRSGSPMARR. Gln-146 carries the post-translational modification Deamidated glutamine; in form C2. Arg-158 is subject to Citrulline. Ser-160 carries the phosphoserine; in C4 and C6 modification. Arg-161 carries the post-translational modification Citrulline; in form C3. Ser-164 is modified (phosphoserine; in form C3, C5 and C6). Citrulline occurs at positions 168 and 169.

Belongs to the myelin basic protein family. In terms of assembly, homodimer; self-associates in the presence of lysolipid. Post-translationally, at least 6 charge isomers; C1 (the most cationic and least modified form), C2, C3, C4, C5 and C6 (the least cationic form); are produced as a result of optional post-translational modifications, such as phosphorylation of serine or threonine residues, deamidation of glutamine or asparagine residues, citrullination and methylation of arginine residues. Phosphorylated by TAOK2, VRK2, MAPK11, MAPK12, MAPK14 and MINK1. In terms of processing, proteolytically cleaved in B cell lysosomes by cathepsin CTSG which degrades the major immunogenic MBP epitope and prevents the activation of MBP-specific autoreactive T cells. In terms of tissue distribution, found in both the central and the peripheral nervous system.

The protein resides in the myelin membrane. Functionally, is, with PLP, the most abundant protein component of the myelin membrane in the CNS. Has a role in both the formation and stabilization of this compact multilayer arrangement of bilayers. Each splice variant and charge isomer may have a specialized function in the assembly of an optimized, biochemically functional myelin membrane. The polypeptide is Myelin basic protein (MBP) (Bos taurus (Bovine)).